A 446-amino-acid polypeptide reads, in one-letter code: Mitochondrial distribution and morphology protein 12 (446 aa).

In terms of domain architecture, SMP-LTD spans 1–446 (MSIDINWEAA…VYPSFWTFLV (446 aa)). Over residues 75 to 85 (DNEIGDGEVSD) the composition is skewed to acidic residues. 3 disordered regions span residues 75–106 (DNEI…SAAD), 126–145 (PHDV…PIRS), and 188–283 (TPLS…RVRE). The segment covering 126-138 (PHDVPIPSKEDPL) has biased composition (basic and acidic residues). A compositionally biased stretch (polar residues) spans 233-246 (TGNSRPSTADTLDS). Residues 260 to 274 (SSDDAHPNVLPRRDN) show a composition bias toward basic and acidic residues.

The protein belongs to the MDM12 family. As to quaternary structure, component of the ER-mitochondria encounter structure (ERMES) or MDM complex, composed of MMM1, MDM10, MDM12 and MDM34. An MMM1 homodimer associates with one molecule of MDM12 on each side in a pairwise head-to-tail manner, and the SMP-LTD domains of MMM1 and MDM12 generate a continuous hydrophobic tunnel for phospholipid trafficking.

The protein resides in the mitochondrion outer membrane. The protein localises to the endoplasmic reticulum membrane. Functionally, component of the ERMES/MDM complex, which serves as a molecular tether to connect the endoplasmic reticulum (ER) and mitochondria. Components of this complex are involved in the control of mitochondrial shape and protein biogenesis, and function in nonvesicular lipid trafficking between the ER and mitochondria. MDM12 is required for the interaction of the ER-resident membrane protein MMM1 and the outer mitochondrial membrane-resident beta-barrel protein MDM10. The MDM12-MMM1 subcomplex functions in the major beta-barrel assembly pathway that is responsible for biogenesis of all mitochondrial outer membrane beta-barrel proteins, and acts in a late step after the SAM complex. The MDM10-MDM12-MMM1 subcomplex further acts in the TOM40-specific pathway after the action of the MDM12-MMM1 complex. Essential for establishing and maintaining the structure of mitochondria and maintenance of mtDNA nucleoids. The chain is Mitochondrial distribution and morphology protein 12 from Coccidioides immitis (strain RS) (Valley fever fungus).